The chain runs to 258 residues: 2-oxo-tetronate isomerase (258 aa).

The Proton donor/acceptor role is filled by Glu143. 4 residues coordinate Mg(2+): Glu143, Asp178, Gln204, and Glu240. The active-site Proton donor/acceptor is the Glu240.

This sequence belongs to the hyi family. OtnI subfamily.

The enzyme catalyses 2-dehydro-L-erythronate = 3-dehydro-L-erythronate. It catalyses the reaction 2-dehydro-D-erythronate = 3-dehydro-D-erythronate. Functionally, catalyzes the isomerization of 2-oxo-tetronate to 3-oxo-tetronate. The sequence is that of 2-oxo-tetronate isomerase from Haemophilus influenzae (strain ATCC 51907 / DSM 11121 / KW20 / Rd).